The chain runs to 351 residues: Histidinol-phosphate aminotransferase (351 aa).

Lysine 221 carries the N6-(pyridoxal phosphate)lysine modification.

The protein belongs to the class-II pyridoxal-phosphate-dependent aminotransferase family. Histidinol-phosphate aminotransferase subfamily. In terms of assembly, homodimer. Requires pyridoxal 5'-phosphate as cofactor.

The enzyme catalyses L-histidinol phosphate + 2-oxoglutarate = 3-(imidazol-4-yl)-2-oxopropyl phosphate + L-glutamate. Its pathway is amino-acid biosynthesis; L-histidine biosynthesis; L-histidine from 5-phospho-alpha-D-ribose 1-diphosphate: step 7/9. This Staphylococcus saprophyticus subsp. saprophyticus (strain ATCC 15305 / DSM 20229 / NCIMB 8711 / NCTC 7292 / S-41) protein is Histidinol-phosphate aminotransferase.